We begin with the raw amino-acid sequence, 206 residues long: 2-oxoglutarate-dependent dioxygenase iboH (206 aa).

The region spanning 51 to 157 (PSTTTLVLLH…RYSIAYFLRP (107 aa)) is the Fe2OG dioxygenase domain. Residues H75, D77, and H134 each contribute to the Fe cation site. Residue R148 participates in 2-oxoglutarate binding.

This sequence belongs to the iron/ascorbate-dependent oxidoreductase family. The cofactor is Fe(2+).

It carries out the reaction L-glutamate + 2-oxoglutarate + O2 = (3R)-3-hydroxy-L-glutamate + succinate + CO2. It functions in the pathway secondary metabolite biosynthesis. Its function is as follows. 2-oxoglutarate-dependent dioxygenase; part of the gene cluster that mediates the biosynthesis of the psychoactive metabolites ibotenic acid and muscimol. The first committed step is glutamate hydroxylation by the 2-oxoglutarate-dependent dioxygenase iboH, and the last step is decarboxylation of ibotenic acid to muscimol by the decarboxylase iboD. The order of the intermediate reactions is somewhat ambiguous. IboA likely activates the carboxylic acid at position 5 to introduce an amide bond, and the flavin monooxygenase iboF generates the N-O bond. There are several options for the latter step. One option is that iboF directly hydroxylates the amide nitrogen formed by iboA to produce a hydroxamic acid species. Another option is that iboF hydroxylates an external N-containing compound, whose resulting N-O bond is subsequently introduced into the hydroxyglutamate scaffold. The paralogous PLP-dependent cystathionine gamma-synthase-like enzymes iboG1 and iboG2 are likely involved in substitution of the OH group at position 3 by the O-N moiety. The first cyclic intermediate is most probably tricholomic acid which is likely desaturated to ibotenic acid by the cytochrome P450 monooxygenase iboC. This is 2-oxoglutarate-dependent dioxygenase iboH from Amanita muscaria (strain Koide BX008).